The primary structure comprises 582 residues: ATP-dependent lipid A-core flippase (582 aa).

A run of 5 helical transmembrane segments spans residues 16–36, 64–84, 153–173, 253–273, and 275–295; these read LWPT…ALIL, LLWM…TSYI, IIGL…ILVV, PIIQ…ASFP, and VMDS…IALM. An ABC transmembrane type-1 domain is found at 28–310; it reads IVAGIALILN…LTNVNAQFQR (283 aa). Positions 342-578 constitute an ABC transporter domain; that stretch reads LEFRNVTFTY…HGVYAQLHKM (237 aa). Position 376–383 (376–383) interacts with ATP; sequence GRSGSGKS.

Belongs to the ABC transporter superfamily. Lipid exporter (TC 3.A.1.106) family. Homodimer.

It localises to the cell inner membrane. It carries out the reaction ATP + H2O + lipid A-core oligosaccharideSide 1 = ADP + phosphate + lipid A-core oligosaccharideSide 2.. In terms of biological role, involved in lipopolysaccharide (LPS) biosynthesis. Translocates lipid A-core from the inner to the outer leaflet of the inner membrane. Transmembrane domains (TMD) form a pore in the inner membrane and the ATP-binding domain (NBD) is responsible for energy generation. In Salmonella choleraesuis (strain SC-B67), this protein is ATP-dependent lipid A-core flippase.